A 137-amino-acid chain; its full sequence is Mandibular organ-inhibiting hormone (137 aa).

A signal peptide spans 1-26 (MTTKCTVMAVVLAACICLQVLPQAYG). Residue Q63 is modified to Pyrrolidone carboxylic acid. Cystine bridges form between C69-C105, C85-C101, and C88-C114. Valine amide is present on V134.

It belongs to the arthropod CHH/MIH/GIH/VIH hormone family. As to expression, produced by the medulla terminalis X-organ in the eyestalks and transported to the sinus gland where it is stored and released.

The protein localises to the secreted. Represses the synthesis of methyl farnesoate, the precursor of insect juvenile hormone III in the mandibular organ. Also has hyperglycemic activity. The polypeptide is Mandibular organ-inhibiting hormone (Libinia emarginata (Portly spider crab)).